The following is a 504-amino-acid chain: Splicing factor SF3a60 homolog (504 aa).

Position 2 is an N-acetylserine (Ser2). Disordered regions lie at residues 293–319 (DKKHFARPPHNGKQNGDAKSTHESENA) and 355–374 (YEEMEGEREGEEANTELESD). Residues 356–374 (EEMEGEREGEEANTELESD) show a composition bias toward acidic residues. The residue at position 373 (Ser373) is a Phosphoserine. A Matrin-type zinc finger spans residues 409–440 (FKCEICGNYSYWGRRAFERHFKEWRHQHGMRC).

It belongs to the SF3A3 family. As to expression, expressed at moderate levels in all sporophytic tissues with strongest expression in gametophytes.

It localises to the nucleus. Its function is as follows. Splicing factor homolog to SF3a60 that may be involved in pre-spliceosome formation. Is necessary for gametic cell fate determination. This Arabidopsis thaliana (Mouse-ear cress) protein is Splicing factor SF3a60 homolog.